The sequence spans 372 residues: Aminomethyltransferase (372 aa).

It belongs to the GcvT family. In terms of assembly, the glycine cleavage system is composed of four proteins: P, T, L and H.

It carries out the reaction N(6)-[(R)-S(8)-aminomethyldihydrolipoyl]-L-lysyl-[protein] + (6S)-5,6,7,8-tetrahydrofolate = N(6)-[(R)-dihydrolipoyl]-L-lysyl-[protein] + (6R)-5,10-methylene-5,6,7,8-tetrahydrofolate + NH4(+). Functionally, the glycine cleavage system catalyzes the degradation of glycine. This Burkholderia orbicola (strain MC0-3) protein is Aminomethyltransferase.